The primary structure comprises 137 residues: Ribonuclease P protein component (137 aa).

It belongs to the RnpA family. Consists of a catalytic RNA component (M1 or rnpB) and a protein subunit.

The enzyme catalyses Endonucleolytic cleavage of RNA, removing 5'-extranucleotides from tRNA precursor.. In terms of biological role, RNaseP catalyzes the removal of the 5'-leader sequence from pre-tRNA to produce the mature 5'-terminus. It can also cleave other RNA substrates such as 4.5S RNA. The protein component plays an auxiliary but essential role in vivo by binding to the 5'-leader sequence and broadening the substrate specificity of the ribozyme. In Porphyromonas gingivalis (strain ATCC BAA-308 / W83), this protein is Ribonuclease P protein component.